The primary structure comprises 204 residues: WW domain-containing protein C11B10.08 (204 aa).

Positions 7-43 (EGLPNGWVAQWDERYKCYFYVNESDPKAKPQWECPVR) constitute a WW domain. A disordered region spans residues 32–117 (PKAKPQWECP…GYPQQPYYYP (86 aa)). 2 stretches are compositionally biased toward low complexity: residues 66–100 (YSNS…GAAP) and 108–117 (GYPQQPYYYP).

The protein resides in the cytoplasm. It localises to the nucleus. This Schizosaccharomyces pombe (strain 972 / ATCC 24843) (Fission yeast) protein is WW domain-containing protein C11B10.08.